The following is a 1049-amino-acid chain: MGEIEQKPTPASRLGAPENSGISTLERGQKPPPTPSGKLMTVKIQMLDDTQEAFEVPQRAPGKVLFDAVCNHLNLVEGDYFGLEFPDHRKIVVWLDLLKPIVKQIRRPKHVLVKFVVKFFPPDHTQLQEELTRYLFALQVKQDLAQGRLTCNDTSAALLISHIVQSEIGDFDEALDREHLAKNKYVPQQDALEDKIVEFHHSHIGQTPAESDFQLLEVARRLEMYGIRLHPAKDREGTKINLAVANTGILVFQGFTKINAFNWAKVRKLSFKRKRFLIKLRPDVNSSYQDTLEFLMAGRDFCKSFWKICVEHHAFFRLFEEPKPKPKPVLFSRGSSFRFSGRTQKQVLDYVKEGGHKKVQFERKHSKIHSTRSLVSQPTAPNSEVPKQSPQSASLTFGEGTESPSAQSCQQAKETKVCTLEPGPRQSPALSKSPSGSKAADGTAAAAPPEEEDEEEGGKDGIRPSNPQPPQPSTGSLTGSPHLSELSINSQGGAAPANVTLSPNLSPDNKQASPLISPLLNDQACPRTDDEEEGRRKRFPTDKAYYIAKEVSTTERTYLKDLEVIASWFQSTVSKEDSMPEALKSLIFPNFEPLHKFHTNFLKEIEQRLALWEGRSNAHIRGDYQRIGDVMLKNIQGMKHLAAHLWKHSEALEALETSIKGSRRLEHFCRDFELQKVCYLPLNTFLLRPLHRLMHYKQVLERLCKHHPPNHADFRDCRAALAEITEMVAQLHGTMIKMENFQKLHELKKDLIGIDNLVIPGREFIRLGSLSKLSGKGLQQRMFFLFNDVLLYTSRGLTASNQFKVHGQLPLYGMTIEESEEEWGVPHCLTLRGQRQSIIVAASSRSEMEKWLEDIQMAIDLAEKSNGPTPELLASSPPDNKSPDEATAADQESEDDLSASRTSLERQAPHRGNTMVHVCWHRSTSVSMVDFSIAVENQLSGNLLRKFKNSNGWQKLWVVFTNFCLFFYKSHQDSHPLASLPLLGYSLTIPSESENIHKDYVFKLHFKSHVYYFRAESEYTFERWMEVIRSATSSASRAHSLSHKESHLY.

The interval Met1–Gly37 is disordered. Residues Ser20 and Ser23 each carry the phosphoserine modification. Thr24 is subject to Phosphothreonine. Positions Met40 to Glu320 constitute an FERM domain. A phosphoserine mark is found at Ser340, Ser373, Ser389, Ser403, Ser427, Ser433, and Ser437. A disordered region spans residues Phe361 to Lys537. 2 stretches are compositionally biased toward polar residues: residues Thr371–Leu395 and Glu402–Ala412. A compositionally biased stretch (low complexity) spans Ser435 to Pro448. 2 stretches are compositionally biased toward polar residues: residues Ser473–Gly492 and Val499–Pro514. Phosphoserine occurs at positions 513 and 517. The DH domain occupies Lys543–Thr734. Residues Glu763–Asp860 form the PH 1 domain. 3 positions are modified to phosphoserine: Ser837, Ser876, and Ser882. The disordered stretch occupies residues Asn866 to Ala908. Thr887 carries the phosphothreonine modification. Phosphoserine occurs at positions 893, 900, and 903. Residues Glu936 to Ser1033 enclose the PH 2 domain.

In terms of assembly, interacts with CADM1. Interacts with RAC1. As to expression, detected in forbrain (at protein level).

Its subcellular location is the cell membrane. The protein resides in the synapse. It is found in the synaptosome. The protein localises to the cytoplasm. It localises to the cytosol. Its subcellular location is the cell projection. The protein resides in the filopodium. It is found in the dendrite. The protein localises to the dendritic spine. Its function is as follows. May play a role in semaphorin signaling. Functions as a guanine nucleotide exchange factor for RAC1. Plays a role in the assembly and disassembly of dendritic filopodia, the formation of dendritic spines, regulation of dendrite length and ultimately the formation of synapses. This chain is FERM, ARHGEF and pleckstrin domain-containing protein 1 (Farp1), found in Rattus norvegicus (Rat).